The sequence spans 433 residues: Tol-Pal system protein TolB (433 aa).

The signal sequence occupies residues 1 to 21 (MINLFRGLLVVLCFASAMVSA).

This sequence belongs to the TolB family. The Tol-Pal system is composed of five core proteins: the inner membrane proteins TolA, TolQ and TolR, the periplasmic protein TolB and the outer membrane protein Pal. They form a network linking the inner and outer membranes and the peptidoglycan layer.

It is found in the periplasm. In terms of biological role, part of the Tol-Pal system, which plays a role in outer membrane invagination during cell division and is important for maintaining outer membrane integrity. This Pseudomonas syringae pv. syringae (strain B728a) protein is Tol-Pal system protein TolB.